The chain runs to 82 residues: Ice-structuring protein A (82 aa).

Positions 1–23 are cleaved as a signal peptide; the sequence is MALSLFTVGQLIFLFWTMRITEA. A propeptide spans 24 to 44 (removed by a dipeptidylpeptidase); that stretch reads SPDPAAKAAPAAAAAPAAAAP. Position 81 is an arginine amide (arginine 81).

This sequence belongs to the type-I AFP family. Detected in liver and in blood serum (at protein level).

It localises to the secreted. Functionally, contributes to protect fish blood from freezing at subzero sea water temperatures. Lowers the blood freezing point. Binds to nascent ice crystals and prevents further growth. The protein is Ice-structuring protein A of Pseudopleuronectes americanus (Winter flounder).